Consider the following 403-residue polypeptide: Probable protein phosphatase 2C 8 (403 aa).

Residues 42–80 are disordered; it reads LGRTASAVAEDDAAKRVRPASDSSSDSSESAKVAPEPTA. A compositionally biased stretch (low complexity) spans 62–71; sequence SDSSSDSSES. The 299-residue stretch at 90-388 folds into the PPM-type phosphatase domain; sequence SHGAVSVIGR…DNISVVVVEL (299 aa). Mn(2+) is bound by residues aspartate 144, glycine 145, aspartate 325, and aspartate 379.

It belongs to the PP2C family. The cofactor is Mg(2+). It depends on Mn(2+) as a cofactor.

It carries out the reaction O-phospho-L-seryl-[protein] + H2O = L-seryl-[protein] + phosphate. The enzyme catalyses O-phospho-L-threonyl-[protein] + H2O = L-threonyl-[protein] + phosphate. The chain is Probable protein phosphatase 2C 8 from Oryza sativa subsp. japonica (Rice).